The chain runs to 355 residues: IgG receptor FcRn large subunit p51 (355 aa).

Residues 1–24 (MRVPRSQPWGLALLLLLLPGTLRA) form the signal peptide. Residues 25 to 111 (AESHRSLLYH…ALKVFGDRDS (87 aa)) are alpha-1. Over 25-300 (AESHRSLLYH…LESPAKSSVP (276 aa)) the chain is Extracellular. Positions 112–201 (YTLQGLLGCE…ERGRGNLEWK (90 aa)) are alpha-2. Asparagine 126 is a glycosylation site (N-linked (GlcNAc...) asparagine). The segment at 202–291 (EPPSMRLKAR…GPAQPLTVEL (90 aa)) is alpha-3. In terms of domain architecture, Ig-like C1-type spans 203–292 (PPSMRLKARP…PAQPLTVELE (90 aa)). Cysteines 222 and 276 form a disulfide. The tract at residues 293 to 298 (SPAKSS) is connecting peptide. Residues 301–321 (VIGISIGFLLLMTVAAGGALL) form a helical membrane-spanning segment. The Cytoplasmic segment spans residues 322 to 355 (WRRRKGLPAPWIAFRGDDIGALLPTPGLSKDAES).

It belongs to the immunoglobulin superfamily. FcRn complex consists of two subunits: p51, and p14 which is equivalent to beta-2-microglobulin. It forms an MHC class I-like heterodimer. Interacts with albumin/ALB; this interaction regulates ALB homeostasis. Expressed in liver and mammary gland of non-lactating animals. Expressed in hepatocytes and in epithelial cells of portal bile ductuli. Not expressed in the brances of portal veins or hepatic arteries. Expressed in the epithelial cells of the acini and ducti in the mammary gland with expression emphasized at the apical side. Not expressed in blood vessels of mammary gland.

It is found in the cell membrane. The protein resides in the endosome membrane. Functionally, cell surface receptor that transfers passive humoral immunity from the mother to the newborn. Binds to the Fc region of monomeric immunoglobulin gamma and mediates its selective uptake from milk. IgG in the milk is bound at the apical surface of the intestinal epithelium. The resultant FcRn-IgG complexes are transcytosed across the intestinal epithelium and IgG is released from FcRn into blood or tissue fluids. Throughout life, contributes to effective humoral immunity by recycling IgG and extending its half-life in the circulation. Mechanistically, monomeric IgG binding to FcRn in acidic endosomes of endothelial and hematopoietic cells recycles IgG to the cell surface where it is released into the circulation. In addition of IgG, regulates homeostasis of the other most abundant circulating protein albumin/ALB. In Camelus dromedarius (Dromedary), this protein is IgG receptor FcRn large subunit p51.